A 365-amino-acid chain; its full sequence is Aminomethyltransferase (365 aa).

This sequence belongs to the GcvT family. The glycine cleavage system is composed of four proteins: P, T, L and H.

The enzyme catalyses N(6)-[(R)-S(8)-aminomethyldihydrolipoyl]-L-lysyl-[protein] + (6S)-5,6,7,8-tetrahydrofolate = N(6)-[(R)-dihydrolipoyl]-L-lysyl-[protein] + (6R)-5,10-methylene-5,6,7,8-tetrahydrofolate + NH4(+). Functionally, the glycine cleavage system catalyzes the degradation of glycine. The protein is Aminomethyltransferase of Cronobacter sakazakii (strain ATCC BAA-894) (Enterobacter sakazakii).